The primary structure comprises 190 residues: Recombination protein RecR (190 aa).

Residues 58–73 (CEQCGALSENELCEIC) form a C4-type zinc finger. In terms of domain architecture, Toprim spans 81 to 167 (NILCIVESPK…TFSKIAQGIP (87 aa)).

The protein belongs to the RecR family.

Functionally, may play a role in DNA repair. It seems to be involved in an RecBC-independent recombinational process of DNA repair. It may act with RecF and RecO. The polypeptide is Recombination protein RecR (Campylobacter jejuni subsp. jejuni serotype O:23/36 (strain 81-176)).